A 307-amino-acid chain; its full sequence is Chlorophyll a-b binding protein 1, chloroplastic (307 aa).

Residues 1–44 (MAPYSVVASVLAAAPPQQSGSVRQLPSTINRAITQRSQSRHVAS) constitute a chloroplast transit peptide. The interval 34–54 (TQRSQSRHVASASSASSPTTM) is disordered. Positions 52, 63, 64, 65, 68, 81, 86, 89, 90, 91, and 92 each coordinate chlorophyll a. Leu96 lines the loroxanthin pocket. Residues 111 to 143 (NYDESRLRWLLEGELYNGRLAMLAVVGVLTVEA) form a helical membrane-spanning segment. Leu120, Glu124, Asn127, Met132, and Lys146 together coordinate chlorophyll a. Residue Trp149 coordinates loroxanthin. 8 residues coordinate chlorophyll a: Glu151, Tyr163, His171, Glu178, Arg181, Glu190, Arg198, and Asp200. Residues 161 to 186 (TPYVVAVVGGHLAFALLEKKRLENFR) form a helical membrane-spanning segment. All-trans-violaxanthin contacts are provided by Asp200 and Leu202. 7 residues coordinate chlorophyll a: Leu204, Asn208, Tyr214, Asn215, Ala218, Asn222, and Arg224. The helical transmembrane segment at 213-238 (DYNRQAEVRNCRLAMLTFLGFSVQAW) threads the bilayer. Residue Phe230 participates in loroxanthin binding. An all-trans-violaxanthin-binding site is contributed by Phe233. Chlorophyll a is bound at residue Gln236. An all-trans-violaxanthin-binding site is contributed by Pro244. Asn247, His251, Pro255, Phe256, Ala258, Asn259, Ile260, and Phe274 together coordinate chlorophyll a. The chain crosses the membrane as a helical span at residues 265–289 (DRGTNVVAIFSAFAAVMHIAELARE).

The protein belongs to the light-harvesting chlorophyll a/b-binding (LHC) protein family. Homooligomer. Component of a light-harvesting complex (LHC) consisting of 11 chlorophyll a-b binding proteins. Binds 11 chlorophylls (Chl-a and Chl-b) and the 2 carotenoids violaxanthin and loroxanthin. serves as cofactor.

It localises to the plastid. It is found in the chloroplast thylakoid membrane. Component of a light-harvesting complex (LHC). The LHC functions as a light receptor, it captures and delivers excitation energy to photosystems with which it is closely associated. Functions in a far-red LHC by absorbing far-red light and promoting photosystem II (PSII) excitation, likely with entropy-driven uphill excitation energy transfer. Exhibits a typical absorption band at 671 nm (Qy band), as well as a large far-red absorption band at 706.5 together with fluorescence emission at around 713 nm (F713). The chain is Chlorophyll a-b binding protein 1, chloroplastic from Prasiola crispa (Green alga).